Here is a 2551-residue protein sequence, read N- to C-terminus: Piezo-type mechanosensitive ion channel component (2551 aa).

A run of 8 helical transmembrane segments spans residues Tyr5–Met25, Pro27–Ala47, Val56–Thr76, Phe106–Ala126, Ile204–Val226, Val231–Cys250, Gly256–Val276, and Leu320–Leu340. Residues Ser354–Thr375 are disordered. The segment covering Pro363 to Thr375 has biased composition (polar residues). The next 9 helical transmembrane spans lie at Thr395 to Tyr415, Ile424 to Ser444, Pro463 to Leu483, Val516 to Phe536, Leu548 to Ile568, Leu588 to Gly608, Met611 to Ser631, Ile639 to Tyr659, and Phe695 to Phe715. The segment covering Gly731–Thr741 has biased composition (polar residues). The segment at Gly731–Thr772 is disordered. Helical transmembrane passes span Ile819–Phe839, Leu857–Leu877, Leu910–Ile930, Leu973–Ile993, Thr994–Leu1014, Ile1022–Val1042, Gly1071–Leu1091, Val1152–Ala1172, Leu1174–Tyr1194, Ile1198–Ile1218, Trp1239–Leu1259, and Ile1275–Leu1295. Disordered stretches follow at residues Asn1426–Ser1521 and Glu1592–Gln1658. Residues Ser1430–Pro1448 are compositionally biased toward basic and acidic residues. Residues Ala1466–Thr1477 show a composition bias toward low complexity. Residues Gln1497–Val1511 are compositionally biased toward basic and acidic residues. 2 stretches are compositionally biased toward low complexity: residues Pro1621–Pro1634 and Leu1644–Gln1658. The next 4 membrane-spanning stretches (helical) occupy residues Ile1718–Ile1738, Val1741–Leu1761, Phe1770–Phe1790, and Ala1817–Leu1837. The tract at residues Phe1854 to Arg1876 is disordered. A run of 7 helical transmembrane segments spans residues Ala1937 to Phe1957, Ile1979 to Tyr1999, Ile2008 to Ala2028, Thr2033 to Leu2053, Phe2075 to Leu2095, Ile2151 to Phe2171, and Thr2431 to Ala2451. The interval Glu2522–Gln2551 is disordered.

It belongs to the PIEZO (TC 1.A.75) family.

The protein localises to the cell membrane. Functionally, component of a mechanosensitive channel required for rapidly adapting mechanically activated (MA) currents. Plays a major role in nociception (response to strong or painful touch). Required for maintaining the mechanosensitivity of tarsal bristle mechanosensors. During their evalulation of potential egg-laying sites, females determine the softest substrate for their eggs first by making a coarse evaluation of substrate hardness using mechanosensitive channels nan and Piezo in the leg tarsal bristles, followed by a much finer assessment using nan, iav and Tmc mechanosensitive channels on the labellum. Acts in the nompC- and nan-expressing neurons of the female leg tarsals, to sense the mild differences in egg-laying substrate stiffness. This Drosophila melanogaster (Fruit fly) protein is Piezo-type mechanosensitive ion channel component.